The chain runs to 480 residues: ATP-grasp enzyme ankG (480 aa).

Residues M1–R30 form a disordered region. A compositionally biased stretch (basic and acidic residues) spans A21–R30.

It carries out the reaction NK13650 D + L-aspartate + ATP = NK13650 C + AMP + diphosphate + H(+). The catalysed reaction is NK13650 B + L-aspartate + ATP = NK13650 A + AMP + diphosphate + H(+). It participates in secondary metabolite biosynthesis. Its function is as follows. ATP-grasp enzyme; part of the ank cluster that mediates the biosynthesis of NK13650 C, a highly modified cyclo-arginine-tyrosine dipeptide. AnkG catalyzes the last step of the pathway via amidation NK13650 D with L-Asp to produce NK13650 C. AnkG also amidates NK13650 B into NK13650 A. Within the pathway, the cyclodipeptide synthase ankA acts as the scaffold-generating enzyme and is responsible for formation of the cyclo-Arg-Tyr diketopiperazine (cRY) from L-Arg and L-Tyr. The ankA product cRY is desaturated by the cytochrome P450 monooxygenase ankB to yield a dehydro-cyclodipeptide intermediate. The FAD-dependent monooxygenase ankC then installs the m-OH, ankD catalyzes the attachment of L-homoserine, and ankE ligates citrate to the ankD product to yield NK13650 B. The O-methyltransferase ankF is responsible for methylation of the C-17 phenol group of NK13650 B to produce NK13650 D. Amidation of NK13650 D with L-Asp by ankG then leads to the production of NK13650 C, whereas amidation of NK13650 B produces NK13650 A. The protein is ATP-grasp enzyme ankG of Aspergillus thermomutatus (Neosartorya pseudofischeri).